Here is a 477-residue protein sequence, read N- to C-terminus: Endogenous retrovirus group V member 1 Env polyprotein (477 aa).

The signal sequence occupies residues 1 to 21; it reads MTEKFLFLYLSLLPMPLLSQA. The Extracellular segment spans residues 22-321; sequence QWNENSLVSF…NTTQPRQKRA (300 aa). N68 is a glycosylation site (N-linked (GlcNAc...) asparagine). The helical transmembrane segment at 322–342 threads the bilayer; it reads LGLILAGMGAAIGMIAPWGGF. Topologically, residues 343 to 477 are cytoplasmic; it reads TYHDVTLRNL…LLSPLWPLSL (135 aa).

It belongs to the gamma type-C retroviral envelope protein family. As to expression, expressed in placenta.

The protein resides in the membrane. The chain is Endogenous retrovirus group V member 1 Env polyprotein (ERVV-1) from Homo sapiens (Human).